A 177-amino-acid polypeptide reads, in one-letter code: Large ribosomal subunit protein uL6 (177 aa).

The protein belongs to the universal ribosomal protein uL6 family. In terms of assembly, part of the 50S ribosomal subunit.

In terms of biological role, this protein binds to the 23S rRNA, and is important in its secondary structure. It is located near the subunit interface in the base of the L7/L12 stalk, and near the tRNA binding site of the peptidyltransferase center. This chain is Large ribosomal subunit protein uL6, found in Rhizobium rhizogenes (strain K84 / ATCC BAA-868) (Agrobacterium radiobacter).